Consider the following 493-residue polypeptide: 3-octaprenyl-4-hydroxybenzoate carboxy-lyase (493 aa).

Asn172 contacts Mn(2+). Residues 175–177 (IYR), 189–191 (RWL), and 194–195 (RG) contribute to the prenylated FMN site. Glu238 contacts Mn(2+). Asp287 functions as the Proton donor in the catalytic mechanism.

It belongs to the UbiD family. Homohexamer. It depends on prenylated FMN as a cofactor. Mn(2+) is required as a cofactor.

It is found in the cell membrane. It carries out the reaction a 4-hydroxy-3-(all-trans-polyprenyl)benzoate + H(+) = a 2-(all-trans-polyprenyl)phenol + CO2. It participates in cofactor biosynthesis; ubiquinone biosynthesis. Its function is as follows. Catalyzes the decarboxylation of 3-octaprenyl-4-hydroxy benzoate to 2-octaprenylphenol, an intermediate step in ubiquinone biosynthesis. The sequence is that of 3-octaprenyl-4-hydroxybenzoate carboxy-lyase from Shewanella loihica (strain ATCC BAA-1088 / PV-4).